We begin with the raw amino-acid sequence, 145 residues long: 3-hydroxyacyl-[acyl-carrier-protein] dehydratase FabZ (145 aa).

The active site involves H49.

The protein belongs to the thioester dehydratase family. FabZ subfamily.

It localises to the cytoplasm. The enzyme catalyses a (3R)-hydroxyacyl-[ACP] = a (2E)-enoyl-[ACP] + H2O. Its function is as follows. Involved in unsaturated fatty acids biosynthesis. Catalyzes the dehydration of short chain beta-hydroxyacyl-ACPs and long chain saturated and unsaturated beta-hydroxyacyl-ACPs. The polypeptide is 3-hydroxyacyl-[acyl-carrier-protein] dehydratase FabZ (Ehrlichia ruminantium (strain Welgevonden)).